The primary structure comprises 102 residues: NADH-quinone oxidoreductase subunit K 2 (102 aa).

3 helical membrane passes run 1–21 (MIVP…LGLV), 30–50 (IIMM…AFVG), and 65–85 (LMIM…VVYL).

The protein belongs to the complex I subunit 4L family. As to quaternary structure, NDH-1 is composed of 14 different subunits. Subunits NuoA, H, J, K, L, M, N constitute the membrane sector of the complex.

It localises to the cell inner membrane. The catalysed reaction is a quinone + NADH + 5 H(+)(in) = a quinol + NAD(+) + 4 H(+)(out). Functionally, NDH-1 shuttles electrons from NADH, via FMN and iron-sulfur (Fe-S) centers, to quinones in the respiratory chain. The immediate electron acceptor for the enzyme in this species is believed to be ubiquinone. Couples the redox reaction to proton translocation (for every two electrons transferred, four hydrogen ions are translocated across the cytoplasmic membrane), and thus conserves the redox energy in a proton gradient. The sequence is that of NADH-quinone oxidoreductase subunit K 2 from Geotalea daltonii (strain DSM 22248 / JCM 15807 / FRC-32) (Geobacter daltonii).